The following is a 137-amino-acid chain: Large ribosomal subunit protein uL16 (137 aa).

The protein belongs to the universal ribosomal protein uL16 family. Part of the 50S ribosomal subunit.

Binds 23S rRNA and is also seen to make contacts with the A and possibly P site tRNAs. In Bartonella quintana (strain Toulouse) (Rochalimaea quintana), this protein is Large ribosomal subunit protein uL16.